A 215-amino-acid chain; its full sequence is Protein-L-isoaspartate O-methyltransferase (215 aa).

Residue Ser62 is part of the active site.

The protein belongs to the methyltransferase superfamily. L-isoaspartyl/D-aspartyl protein methyltransferase family.

It localises to the cytoplasm. It catalyses the reaction [protein]-L-isoaspartate + S-adenosyl-L-methionine = [protein]-L-isoaspartate alpha-methyl ester + S-adenosyl-L-homocysteine. Functionally, catalyzes the methyl esterification of L-isoaspartyl residues in peptides and proteins that result from spontaneous decomposition of normal L-aspartyl and L-asparaginyl residues. It plays a role in the repair and/or degradation of damaged proteins. The protein is Protein-L-isoaspartate O-methyltransferase of Nitratidesulfovibrio vulgaris (strain DSM 19637 / Miyazaki F) (Desulfovibrio vulgaris).